The sequence spans 1066 residues: Ubiquitin conjugation factor E4 A (1066 aa).

Residues 35–57 form a disordered region; it reads QLKQQSDELPASPDDSDNSVSES. N6-acetyllysine is present on lysine 386. In terms of domain architecture, U-box spans 987-1061; sequence DACDEFLDPI…QRWLAERKQQ (75 aa).

This sequence belongs to the ubiquitin conjugation factor E4 family.

Its subcellular location is the cytoplasm. It carries out the reaction S-ubiquitinyl-[E2 ubiquitin-conjugating enzyme]-L-cysteine + [acceptor protein]-L-lysine = [E2 ubiquitin-conjugating enzyme]-L-cysteine + N(6)-ubiquitinyl-[acceptor protein]-L-lysine.. Its pathway is protein modification; protein ubiquitination. Its function is as follows. Ubiquitin-protein ligase that probably functions as an E3 ligase in conjunction with specific E1 and E2 ligases. May also function as an E4 ligase mediating the assembly of polyubiquitin chains on substrates ubiquitinated by another E3 ubiquitin ligase. Mediates 'Lys-48'-linked polyubiquitination of substrates. This is Ubiquitin conjugation factor E4 A from Rattus norvegicus (Rat).